The following is a 638-amino-acid chain: Neuroendocrine convertase 2 (638 aa).

Residues 1 to 25 form the signal peptide; that stretch reads MKGGCVSQWKAAAGFLFCVMVFASA. A propeptide spanning residues 26–109 is cleaved from the precursor; that stretch reads ERPVFTNHFL…QQEGFDRKKR (84 aa). Positions 129-453 constitute a Peptidase S8 domain; sequence QWYLINTGQA…YGVLDAGAMV (325 aa). Residues Asp167 and His208 each act as charge relay system in the active site. Disulfide bonds link Cys225/Cys376 and Cys317/Cys347. Asn375 is a glycosylation site (N-linked (GlcNAc...) asparagine). The active-site Charge relay system is the Ser384. A P/Homo B domain is found at 461 to 597; it reads TVPERFHCVG…TLMLHGTQSA (137 aa). An intrachain disulfide couples Cys468 to Cys494. Residues Asn514 and Asn524 are each glycosylated (N-linked (GlcNAc...) asparagine).

This sequence belongs to the peptidase S8 family. Furin subfamily.

It is found in the cytoplasmic vesicle. It localises to the secretory vesicle. The protein localises to the secreted. The catalysed reaction is Release of protein hormones and neuropeptides from their precursors, generally by hydrolysis of -Lys-Arg-|- bonds.. Its function is as follows. Serine endopeptidase which is involved in the processing of hormone and other protein precursors at sites comprised of pairs of basic amino acid residues. Responsible for the release of glucagon from proglucagon in pancreatic A cells. In Pongo abelii (Sumatran orangutan), this protein is Neuroendocrine convertase 2 (PCSK2).